The sequence spans 247 residues: 5'-nucleotidase SurE (247 aa).

The a divalent metal cation site is built by Asp-8, Asp-9, Ser-39, and Asn-91.

It belongs to the SurE nucleotidase family. Requires a divalent metal cation as cofactor.

The protein resides in the cytoplasm. It carries out the reaction a ribonucleoside 5'-phosphate + H2O = a ribonucleoside + phosphate. Functionally, nucleotidase that shows phosphatase activity on nucleoside 5'-monophosphates. The protein is 5'-nucleotidase SurE of Chromobacterium violaceum (strain ATCC 12472 / DSM 30191 / JCM 1249 / CCUG 213 / NBRC 12614 / NCIMB 9131 / NCTC 9757 / MK).